Reading from the N-terminus, the 171-residue chain is uncharacterized protein (171 aa).

Positions 1–17 (MLKRIIWILFLLGLTWG) are cleaved as a signal peptide.

Part of the elfADCG-ycbUVF fimbrial operon, which promotes adhesion of bacteria to different abiotic surfaces. This is an uncharacterized protein from Escherichia coli (strain K12).